We begin with the raw amino-acid sequence, 347 residues long: Ribosomal RNA large subunit methyltransferase M (347 aa).

Residues Ser-184, 217 to 220 (APGG), Asp-236, Asp-256, and Asp-272 each bind S-adenosyl-L-methionine. Lys-301 acts as the Proton acceptor in catalysis.

Belongs to the class I-like SAM-binding methyltransferase superfamily. RNA methyltransferase RlmE family. RlmM subfamily. Monomer.

It is found in the cytoplasm. It carries out the reaction cytidine(2498) in 23S rRNA + S-adenosyl-L-methionine = 2'-O-methylcytidine(2498) in 23S rRNA + S-adenosyl-L-homocysteine + H(+). Catalyzes the 2'-O-methylation at nucleotide C2498 in 23S rRNA. This is Ribosomal RNA large subunit methyltransferase M from Xanthomonas axonopodis pv. citri (strain 306).